The following is a 527-amino-acid chain: Benzoate--CoA ligase (527 aa).

The protein belongs to the ATP-dependent AMP-binding enzyme family. Benzoate-CoA ligase subfamily. As to quaternary structure, monomer.

The catalysed reaction is benzoate + ATP + CoA = benzoyl-CoA + AMP + diphosphate. In terms of biological role, catalyzes the ligation of benzoate and CoA to form benzoyl-CoA at the expense of ATP. The enzyme also ligates 2-aminobenzoate and CoA. The enzyme shows activity toward a number of benzoate derivatives. This is Benzoate--CoA ligase (bclA) from Thauera aromatica.